Here is a 98-residue protein sequence, read N- to C-terminus: Large ribosomal subunit protein uL23 (98 aa).

This sequence belongs to the universal ribosomal protein uL23 family. As to quaternary structure, part of the 50S ribosomal subunit. Contacts protein L29, and trigger factor when it is bound to the ribosome.

One of the early assembly proteins it binds 23S rRNA. One of the proteins that surrounds the polypeptide exit tunnel on the outside of the ribosome. Forms the main docking site for trigger factor binding to the ribosome. The polypeptide is Large ribosomal subunit protein uL23 (Legionella pneumophila (strain Paris)).